Here is a 462-residue protein sequence, read N- to C-terminus: Transcription factor-like protein EUC1 (462 aa).

Disordered regions lie at residues 11–43 (GFGGYGSLDDDDSDRDSERRNHDLGQRTITTSP) and 66–97 (RPTDAAQPPIVSTSTSASATEPTNRIGPGRIK). Phosphoserine occurs at positions 17 and 23. Over residues 26 to 35 (DSERRNHDLG) the composition is skewed to basic and acidic residues. Positions 81–140 (SASATEPTNRIGPGRIKETPETNFNAFLIAQLTRMEEQNANLKEEISLMKKEQELFFLEN) are homodimerization region. The stretch at 105–135 (NAFLIAQLTRMEEQNANLKEEISLMKKEQEL) forms a coiled coil. 2 disordered regions span residues 190–214 (QEAARVGNPSTSTQAHQSQSRSTNW) and 226–289 (GDPR…RNRR). Polar residues predominate over residues 197–214 (NPSTSTQAHQSQSRSTNW). A Glycyl lysine isopeptide (Lys-Gly) (interchain with G-Cter in SUMO) cross-link involves residue lysine 231. Residues serine 237 and serine 249 each carry the phosphoserine modification. Over residues 240-251 (ENGEYDGNESDE) the composition is skewed to acidic residues. The segment covering 252 to 282 (NATTRNLPLNNPDSVSNADDSNNQLDGTGNE) has biased composition (polar residues). A Phosphothreonine modification is found at threonine 254. The tract at residues 296–385 (YKLNRAIQNV…QAIKVVENIR (90 aa)) is GCR1 DNA-binding region. Polar residues predominate over residues 441–455 (SLQQPHSIPNSSTGT). Positions 441–462 (SLQQPHSIPNSSTGTPEHDQDT) are disordered.

Homodimer. Interacts with SLX5. Sumoylated at Lys-231 and subsequently ubiquitinated by the SUMO-targeted ubiquitin ligase (STUbL) complex SLX5/SLX8.

The protein localises to the chromosome. Its function is as follows. Transcription factor-like protein that binds to specific DNA motifs called ub-HS-motif associated with several locations where proteins other than histone H2B are ubiquitinated (ub-hotspots). Ubiquitination at these sites depends on the SUMO-targeted ubiquitin ligase (STUbL) complex SLX5/SLX8 and protein turnover on the CDC48 segregase. UBC9, SIZ1, or SIZ2 sumoylate DNA-bound EUC1 to stabilize its DNA-binding. Sumoylated EUC1 acts a cofactor required for the recruitment of the SLX5/SLX8 STUbL complex via specific contacts between EUC1 and SLX5, as well as an additional SUMO-mediated interaction. SLX5/SLX8 then ubiquitinates EUC1 and presumably other targets at ub-hotspots, and the CDC48/UFD1/NPL4 complex, together with UBX4 and UBX5, removes Lys-48-linked ubiquitinated proteins from chromatin. Ubiquitinated proteins could be either degraded by the proteasome or recycled by deubiquitination. EUC1 itself does not seem to underlie extensive turnover, as it is a very stable protein. EUC1 is able to act as a transcription factor, but its function at ub-hotspots does not seem to depend on this ability. EUC1-mediated ub-hotspots are crucial during stress responses when gene expression control is impaired. The chain is Transcription factor-like protein EUC1 from Saccharomyces cerevisiae (strain ATCC 204508 / S288c) (Baker's yeast).